A 146-amino-acid polypeptide reads, in one-letter code: Hemoglobin subunit beta (146 aa).

The Globin domain occupies 2–146; sequence QWSESERTII…VVSALGKQYH (145 aa). Heme b-binding residues include His63 and His92.

The protein belongs to the globin family. Heterotetramer of two alpha chains and two beta chains. Red blood cells.

Its function is as follows. Involved in oxygen transport from gills to the various peripheral tissues. In Pogonophryne scotti (Saddleback plunderfish), this protein is Hemoglobin subunit beta (hbb).